A 489-amino-acid polypeptide reads, in one-letter code: Adenylosuccinate synthetase 2, chloroplastic (489 aa).

The N-terminal 54 residues, 1-54 (MPLASLSLDPAPFPLIRPAAGWSGRVLPVPGPAPRLCRPLRAAPVAPATTDEPS), are a transit peptide targeting the chloroplast. GTP contacts are provided by residues 76–82 (GDEGKGK) and 104–106 (GHT). The active-site Proton acceptor is Asp77. Mg(2+)-binding residues include Asp77 and Gly104. Residues 77–80 (DEGK), 102–105 (NAGH), Thr194, Arg208, Gln288, Thr303, and Arg367 contribute to the IMP site. His105 acts as the Proton donor in catalysis. Residue 363–369 (TTTGRPR) participates in substrate binding. GTP is bound by residues Arg369, 395 to 397 (KLD), and 478 to 480 (GVG).

This sequence belongs to the adenylosuccinate synthetase family. Homodimer. It depends on Mg(2+) as a cofactor.

It is found in the plastid. It localises to the chloroplast. The catalysed reaction is IMP + L-aspartate + GTP = N(6)-(1,2-dicarboxyethyl)-AMP + GDP + phosphate + 2 H(+). Its pathway is purine metabolism; AMP biosynthesis via de novo pathway; AMP from IMP: step 1/2. Plays an important role in the de novo pathway and in the salvage pathway of purine nucleotide biosynthesis. Catalyzes the first committed step in the biosynthesis of AMP from IMP. This Sorghum bicolor (Sorghum) protein is Adenylosuccinate synthetase 2, chloroplastic.